The chain runs to 92 residues: uncharacterized protein (92 aa).

This is an uncharacterized protein from Saccharomyces cerevisiae (strain ATCC 204508 / S288c) (Baker's yeast).